Reading from the N-terminus, the 418-residue chain is Glutamyl-tRNA reductase (418 aa).

Residues 57-60 (TCNR), Ser113, 118-120 (DFE), and Gln124 each bind substrate. The Nucleophile role is filled by Cys58. 193-198 (GTGKIG) serves as a coordination point for NADP(+).

It belongs to the glutamyl-tRNA reductase family. As to quaternary structure, homodimer.

The catalysed reaction is (S)-4-amino-5-oxopentanoate + tRNA(Glu) + NADP(+) = L-glutamyl-tRNA(Glu) + NADPH + H(+). The protein operates within porphyrin-containing compound metabolism; protoporphyrin-IX biosynthesis; 5-aminolevulinate from L-glutamyl-tRNA(Glu): step 1/2. Catalyzes the NADPH-dependent reduction of glutamyl-tRNA(Glu) to glutamate 1-semialdehyde (GSA). The sequence is that of Glutamyl-tRNA reductase from Christiangramia forsetii (strain DSM 17595 / CGMCC 1.15422 / KT0803) (Gramella forsetii).